The following is a 225-amino-acid chain: KDP operon transcriptional regulatory protein KdpE (225 aa).

One can recognise a Response regulatory domain in the interval 3–116 (NVLIVEDEQA…ELQARLRVAL (114 aa)). Asp-52 is subject to 4-aspartylphosphate. Positions 126–225 (DPLVKFSDVT…ETGIGYRFML (100 aa)) form a DNA-binding region, ompR/PhoB-type.

In terms of processing, phosphorylated by KdpD.

The protein localises to the cytoplasm. Its function is as follows. Member of the two-component regulatory system KdpD/KdpE involved in the regulation of the kdp operon. This is KDP operon transcriptional regulatory protein KdpE (kdpE) from Escherichia coli (strain K12).